A 347-amino-acid polypeptide reads, in one-letter code: Ceramide very long chain fatty acid hydroxylase scs7 (347 aa).

The Cytoplasmic portion of the chain corresponds to 1 to 156 (MASVTSEKCV…GNFLEPLTKT (156 aa)). A helical membrane pass occupies residues 157–177 (PWYMIPLIWVPCVTYGFLYAC). T178 is a topological domain (lumenal). A helical membrane pass occupies residues 179-199 (GIPFSVAITFFIIGLFTWTLV). Residues 200 to 238 (EYTMHRFLFHLDEYTPDHPIFLTMHFAFHGCHHFLPADK) lie on the Cytoplasmic side of the membrane. Zn(2+) is bound by residues H204, H209, H228, H231, and H232. The chain crosses the membrane as a helical span at residues 239–259 (YRLVMPPALFLIFATPWYHFI). Q260 is a topological domain (lumenal). The chain crosses the membrane as a helical span at residues 261 to 281 (LVLPHYIGVAGFSGAILGYVF). Residues 282-347 (YDLTHYFLHH…EQGKISTKAK (66 aa)) are Cytoplasmic-facing. The Zn(2+) site is built by H286, H290, H306, H309, and H310.

Belongs to the sterol desaturase family. SCS7 subfamily. Zn(2+) serves as cofactor.

It is found in the endoplasmic reticulum membrane. It functions in the pathway sphingolipid metabolism. Functionally, ceramide hydroxylase involved in the hydroxylation of sphingolipid-associated very long chain fatty acids. Postulated to hydroxylate the very long chain fatty acid of dihydroceramides and phytoceramides at C-2. This Schizosaccharomyces pombe (strain 972 / ATCC 24843) (Fission yeast) protein is Ceramide very long chain fatty acid hydroxylase scs7.